Consider the following 328-residue polypeptide: Probable cell division protein WhiA (328 aa).

Positions 276 to 309 (SLEELGRLADPQMTKDAVAGRIRRLLHMADKKAS) form a DNA-binding region, H-T-H motif.

This sequence belongs to the WhiA family.

Involved in cell division and chromosome segregation. This is Probable cell division protein WhiA from Corynebacterium diphtheriae (strain ATCC 700971 / NCTC 13129 / Biotype gravis).